Reading from the N-terminus, the 83-residue chain is Small ribosomal subunit protein bS20 (83 aa).

Belongs to the bacterial ribosomal protein bS20 family.

Binds directly to 16S ribosomal RNA. The chain is Small ribosomal subunit protein bS20 from Flavobacterium johnsoniae (strain ATCC 17061 / DSM 2064 / JCM 8514 / BCRC 14874 / CCUG 350202 / NBRC 14942 / NCIMB 11054 / UW101) (Cytophaga johnsonae).